A 534-amino-acid polypeptide reads, in one-letter code: Signal recognition particle subunit SRP54 (534 aa).

The segment at 1-296 is G-domain; the sequence is MVLQDLGRRI…EPKAFIQKLL (296 aa). Residues 109-116, 191-195, and 249-252 each bind GTP; these read GLQGAGKT, DTSGR, and TKTD. Residues 297–534 form an M-domain region; sequence GMGDMAGLVE…GGGGGRGRGR (238 aa).

It belongs to the GTP-binding SRP family. SRP54 subfamily. In terms of assembly, fungal signal recognition particle consists of a 7S RNA molecule (scR1) and at least six protein subunits: srp72, srp68, srpA/srp54, sec65, srp21 and srp14.

Its subcellular location is the cytoplasm. The protein resides in the endoplasmic reticulum. The catalysed reaction is GTP + H2O = GDP + phosphate + H(+). In terms of biological role, signal-recognition-particle (SRP) assembly has a crucial role in targeting secretory proteins to the rough endoplasmic reticulum (ER) membrane. SRP is required for the cotranslational protein translocation for ER import and preferentially recognizes strongly hydrophobic signal sequences. It is involved in targeting the nascent chain-ribosome (RNC) complex to the ER and is proposed to participate in the arrest of nascent chain elongation during membrane targeting. srpA/srp54 binds to the signal sequence of presecretory protein when they emerge from the ribosomes. srpA/srp54 interacts with the scR1 RNA and mediates the association of the resulting SRP-RNC complex with the signal recognition particle receptor (SR) via its alpha subunit srp101. Both, srpA/srp54 and srp101, are locked in their GTP bound forms in the SRP-RNC-SR complex, which dissociates upon transferring the signal sequence to the protein-conducting channel (translocon). After signal sequence transfer, srpA/srp54 and srp101 act as reciprocal GTPase-activating proteins (GAPs), thereby resolving their association. This Aspergillus niger protein is Signal recognition particle subunit SRP54 (srpA).